The primary structure comprises 905 residues: Protein translocase subunit SecA (905 aa).

ATP is bound by residues Gln-89, 107–111, and Asp-502; that span reads GEGKT. The disordered stretch occupies residues 837-885; that stretch reads EQTDVGDPILNDQNKKNSSTLWTPSQENKFVNPKDRNPSDSTTWGKVGR. Over residues 852-865 the composition is skewed to polar residues; it reads KNSSTLWTPSQENK. Residues Cys-889, Cys-891, Cys-900, and His-901 each coordinate Zn(2+).

Belongs to the SecA family. In terms of assembly, monomer and homodimer. Part of the essential Sec protein translocation apparatus which comprises SecA, SecYEG and auxiliary proteins SecDF-YajC and YidC. Requires Zn(2+) as cofactor.

Its subcellular location is the cell inner membrane. It localises to the cytoplasm. The catalysed reaction is ATP + H2O + cellular proteinSide 1 = ADP + phosphate + cellular proteinSide 2.. Part of the Sec protein translocase complex. Interacts with the SecYEG preprotein conducting channel. Has a central role in coupling the hydrolysis of ATP to the transfer of proteins into and across the cell membrane, serving both as a receptor for the preprotein-SecB complex and as an ATP-driven molecular motor driving the stepwise translocation of polypeptide chains across the membrane. The chain is Protein translocase subunit SecA from Bartonella henselae (strain ATCC 49882 / DSM 28221 / CCUG 30454 / Houston 1) (Rochalimaea henselae).